The sequence spans 105 residues: UPF0145 protein jk0060 (105 aa).

It belongs to the UPF0145 family.

This Corynebacterium jeikeium (strain K411) protein is UPF0145 protein jk0060.